A 135-amino-acid polypeptide reads, in one-letter code: Large ribosomal subunit protein uL16c (135 aa).

Belongs to the universal ribosomal protein uL16 family. Part of the 50S ribosomal subunit.

The protein localises to the plastid. Its subcellular location is the chloroplast. The polypeptide is Large ribosomal subunit protein uL16c (Lotus japonicus (Lotus corniculatus var. japonicus)).